The chain runs to 151 residues: uncharacterized protein (151 aa).

This is an uncharacterized protein from Rhizobium meliloti (strain 1021) (Ensifer meliloti).